Here is a 237-residue protein sequence, read N- to C-terminus: Phosphoribosylaminoimidazole-succinocarboxamide synthase (237 aa).

It belongs to the SAICAR synthetase family.

The catalysed reaction is 5-amino-1-(5-phospho-D-ribosyl)imidazole-4-carboxylate + L-aspartate + ATP = (2S)-2-[5-amino-1-(5-phospho-beta-D-ribosyl)imidazole-4-carboxamido]succinate + ADP + phosphate + 2 H(+). The protein operates within purine metabolism; IMP biosynthesis via de novo pathway; 5-amino-1-(5-phospho-D-ribosyl)imidazole-4-carboxamide from 5-amino-1-(5-phospho-D-ribosyl)imidazole-4-carboxylate: step 1/2. This chain is Phosphoribosylaminoimidazole-succinocarboxamide synthase, found in Proteus mirabilis (strain HI4320).